Reading from the N-terminus, the 154-residue chain is UPF0178 protein BAV3236 (154 aa).

It belongs to the UPF0178 family.

In Bordetella avium (strain 197N), this protein is UPF0178 protein BAV3236.